An 85-amino-acid polypeptide reads, in one-letter code: Augerpeptide-s6a (85 aa).

Residues 1 to 20 (MTLTMSTVVFFSLILLTLGL) form the signal peptide. A propeptide spanning residues 21–43 (QPKDKDEGVMGRSRLGKRGLLMR) is cleaved from the precursor. Intrachain disulfides connect cysteine 54/cysteine 65, cysteine 58/cysteine 70, and cysteine 64/cysteine 81.

As to expression, expressed by the venom duct.

Its subcellular location is the secreted. This Terebra subulata (Chocolate spotted auger) protein is Augerpeptide-s6a.